The chain runs to 180 residues: Large ribosomal subunit protein uL10 (180 aa).

Belongs to the universal ribosomal protein uL10 family. Part of the ribosomal stalk of the 50S ribosomal subunit. The N-terminus interacts with L11 and the large rRNA to form the base of the stalk. The C-terminus forms an elongated spine to which L12 dimers bind in a sequential fashion forming a multimeric L10(L12)X complex.

Forms part of the ribosomal stalk, playing a central role in the interaction of the ribosome with GTP-bound translation factors. The polypeptide is Large ribosomal subunit protein uL10 (Thermosipho melanesiensis (strain DSM 12029 / CIP 104789 / BI429)).